Here is an 842-residue protein sequence, read N- to C-terminus: MTDTTLPPEGEAHDRIEPVDIQQEMQRSYIDYAMSVIVGRALPEVRDGLKPVHRRVLYAMYDSGFRPDRSHAKSARSVAETMGNYHPHGDASIYDTLVRMAQPWSLRYPLVDGQGNFGSPGNDPPAAMRYTEARLTPLAMEMLREIDEETVDFIPNYDGRVQEPTVLPSRFPNLLANGSGGIAVGMATNIPPHNLGELAEAVYWCLENYEADEEATCEAVMERVKGPDFPTSGLIVGTQGIEDTYKTGRGSIKMRGVVEIEEDSRGRTSIVITELPYQVNHDNFITSIAEQVRDGKLAGISNIEDQSSDRVGLRIVVELKRDAVAKVVLNNLYKHTQLQTSFGANMLSIVDGVPRTLRLDQLIRLYVDHQLDVIVRRTRYRLRKANERAHILRGLVKALDALDEVIALIRASQTVDIARAGLIELLDIDDIQAQAILDMQLRRLAALERQKIVDDLAKIEAEIADLEDILAKPERQRGIVRDELKEIVDKHGDARRTRIVPADGEVSDEDLIAREDVVVTITETGYAKRTKTDLYRSQKRGGKGVQGAGLKQDDMVNHFFVCSTHDWILFFTTQGRVYRAKAYELPEASRTARGQHVANLLAFQPEERIAQVIQIKSYEDAPYLVLATRNGLVKKSKLSDFDSNRSGGIVAINLREGDELVGAVLCSAEDDLLLVSANGQSIRFSATDEALRPMGRATSGVQGMRFNEDDRLLSLNVVRPDTYLLVATSGGYAKRTSIDEYSVQGRGGKGILTIQYDRKRGSLVGALIVDDDTELYAITSTGGVIRTAARQVRKAGRQTKGVRLMNLAEGDTLIAIARNADEDEAAESISESDADTAESPEA.

The region spanning 42–511 (LPEVRDGLKP…ADGEVSDEDL (470 aa)) is the Topo IIA-type catalytic domain. Catalysis depends on Y130, which acts as the O-(5'-phospho-DNA)-tyrosine intermediate. Positions 538–544 (QKRGGKG) match the GyrA-box motif. Positions 822 to 842 (EDEAAESISESDADTAESPEA) are disordered.

It belongs to the type II topoisomerase GyrA/ParC subunit family. As to quaternary structure, heterotetramer, composed of two GyrA and two GyrB chains. In the heterotetramer, GyrA contains the active site tyrosine that forms a transient covalent intermediate with DNA, while GyrB binds cofactors and catalyzes ATP hydrolysis.

The protein localises to the cytoplasm. It carries out the reaction ATP-dependent breakage, passage and rejoining of double-stranded DNA.. With respect to regulation, inhibited by 4-quinoline drugs (nalidixic acid, ciprofloxacin, ofloxacin), although it is much less sensitive than the corresponding enzyme from E.coli. In terms of biological role, a type II topoisomerase that negatively supercoils closed circular double-stranded (ds) DNA in an ATP-dependent manner to modulate DNA topology and maintain chromosomes in an underwound state. Negative supercoiling favors strand separation, and DNA replication, transcription, recombination and repair, all of which involve strand separation. Also able to catalyze the interconversion of other topological isomers of dsDNA rings, including catenanes and knotted rings. Type II topoisomerases break and join 2 DNA strands simultaneously in an ATP-dependent manner. In Mycolicibacterium smegmatis (strain ATCC 700084 / mc(2)155) (Mycobacterium smegmatis), this protein is DNA gyrase subunit A.